Reading from the N-terminus, the 557-residue chain is Kelch repeat and BTB domain-containing protein 2 (557 aa).

A BTB domain is found at 26–95 (CDVIITIGDG…LYNRHISSMN (70 aa)). Positions 133 to 223 (HKLYEMVHIP…CIDIQNLDKK (91 aa)) constitute a BACK domain. Kelch repeat units follow at residues 305–352 (EIII…VIDD), 353–399 (TIYA…VLDQ), and 401–464 (IYII…SHKD).

In terms of assembly, interacts (via BTB domain) with host CUL3.

Its subcellular location is the host cytoplasm. Its function is as follows. Probable substrate-specific adapter of CUL3-containing E3 ubiquitin-protein ligases which mediate the ubiquitination and subsequent proteasomal degradation of host target proteins. This Bos taurus (Bovine) protein is Kelch repeat and BTB domain-containing protein 2 (KBTB2).